A 639-amino-acid polypeptide reads, in one-letter code: Chaperone protein DnaK (639 aa).

Phosphothreonine; by autocatalysis is present on threonine 198. Over residues 603-618 the composition is skewed to low complexity; sequence AKAQTQGGAQEGAAKQ. The interval 603-639 is disordered; that stretch reads AKAQTQGGAQEGAAKQSNATADDVVDAEFEEVKDDKK. Residues 625-639 show a composition bias toward acidic residues; sequence DVVDAEFEEVKDDKK.

It belongs to the heat shock protein 70 family.

Functionally, acts as a chaperone. The sequence is that of Chaperone protein DnaK from Shewanella sp. (strain MR-4).